A 352-amino-acid chain; its full sequence is Dof zinc finger protein DOF1.8 (352 aa).

The tract at residues L24–D46 is disordered. Residues V37–D46 show a composition bias toward basic and acidic residues. The Dof-type zinc finger occupies L49–R103. Zn(2+)-binding residues include C51, C54, C76, and C79. Disordered regions lie at residues P93–H136 and G265–W334. A compositionally biased stretch (low complexity) spans S104 to T129. Residues E310 to E323 are compositionally biased toward basic and acidic residues.

The protein resides in the nucleus. Transcription factor that binds specifically to a 5'-AA[AG]G-3' consensus core sequence. This chain is Dof zinc finger protein DOF1.8 (DOF1.8), found in Arabidopsis thaliana (Mouse-ear cress).